Here is a 531-residue protein sequence, read N- to C-terminus: uncharacterized protein (531 aa).

The N-terminal stretch at 1-28 is a signal peptide; the sequence is MNTKGIIAKLTAGALIANLLICPANTLA. SLH domains lie at 29–85, 86–149, and 150–210; these read EKKT…QINK, QAKP…IGDL, and PTQF…SKRM. Positions 335–517 constitute a MurNAc-LAA domain; that stretch reads IIIDPGHGGI…AAEAIYAGIL (183 aa).

It in the C-terminal section; belongs to the N-acetylmuramoyl-L-alanine amidase 3 family.

It is found in the secreted. Its subcellular location is the cell wall. The protein localises to the S-layer. This is an uncharacterized protein from Bacillus anthracis.